The sequence spans 464 residues: tRNA modification GTPase MnmE (464 aa).

Residues Arg-27, Glu-90, and Lys-129 each coordinate (6S)-5-formyl-5,6,7,8-tetrahydrofolate. Residues 222-384 form the TrmE-type G domain; the sequence is GVTLVLAGSV…LYDKIKTLIS (163 aa). Residues 232 to 237, 251 to 257, and 276 to 279 contribute to the GTP site; these read NAGKSS, SSYPGTT, and DTAG. Ser-236 and Thr-257 together coordinate Mg(2+). Lys-464 is a binding site for (6S)-5-formyl-5,6,7,8-tetrahydrofolate.

Belongs to the TRAFAC class TrmE-Era-EngA-EngB-Septin-like GTPase superfamily. TrmE GTPase family. In terms of assembly, homodimer. Heterotetramer of two MnmE and two MnmG subunits. The cofactor is K(+).

It localises to the cytoplasm. In terms of biological role, exhibits a very high intrinsic GTPase hydrolysis rate. Involved in the addition of a carboxymethylaminomethyl (cmnm) group at the wobble position (U34) of certain tRNAs, forming tRNA-cmnm(5)s(2)U34. The sequence is that of tRNA modification GTPase MnmE from Borrelia garinii subsp. bavariensis (strain ATCC BAA-2496 / DSM 23469 / PBi) (Borreliella bavariensis).